Reading from the N-terminus, the 188-residue chain is dCTP deaminase (188 aa).

Lys-109–Arg-114 contacts dCTP. The active-site Proton donor/acceptor is Glu-135. The dCTP site is built by Gln-154, Tyr-168, and Gln-178.

This sequence belongs to the dCTP deaminase family. Homotrimer.

The catalysed reaction is dCTP + H2O + H(+) = dUTP + NH4(+). It participates in pyrimidine metabolism; dUMP biosynthesis; dUMP from dCTP (dUTP route): step 1/2. Its function is as follows. Catalyzes the deamination of dCTP to dUTP. This chain is dCTP deaminase, found in Helicobacter pylori (strain Shi470).